A 374-amino-acid chain; its full sequence is Ribonuclease D (374 aa).

Residues 6-171 enclose the 3'-5' exonuclease domain; the sequence is IISTTEDLKK…RATRVILLSK (166 aa). Positions 213-292 constitute an HRDC domain; sequence DRKSIGVAQE…ARALNKKEVD (80 aa).

The protein belongs to the RNase D family. The cofactor is a divalent metal cation.

It is found in the cytoplasm. The enzyme catalyses Exonucleolytic cleavage that removes extra residues from the 3'-terminus of tRNA to produce 5'-mononucleotides.. Exonuclease involved in the 3' processing of various precursor tRNAs. Initiates hydrolysis at the 3'-terminus of an RNA molecule and releases 5'-mononucleotides. This is Ribonuclease D from Desulfotalea psychrophila (strain LSv54 / DSM 12343).